Reading from the N-terminus, the 184-residue chain is Histone H3-like centromeric protein CSE4 (184 aa).

The interval 54-81 (YIQPERSASSQQIHPPEHHISAHERITK) is disordered. The span at 68–80 (PPEHHISAHERIT) shows a compositional bias: basic and acidic residues. Residues 82-182 (ARGTRYKPTD…MQLARRIRGQ (101 aa)) are H3-like.

Belongs to the histone H3 family. Component of centromeric nucleosomes, where DNA is wrapped around a histone octamer core. The octamer contains two molecules each of H2A, H2B, CSE4/CENPA and H4 assembled in one CSE4-H4 heterotetramer and two H2A-H2B heterodimers. Interacts with the inner kinetochore. Ubiquitinated. Is degraded through ubiquitin-mediated proteolysis when not protected by its association to the kinetochore.

It localises to the nucleus. It is found in the chromosome. Its subcellular location is the centromere. Histone H3-like nucleosomal protein that is specifically found in centromeric nucleosomes. Replaces conventional H3 in the nucleosome core of centromeric chromatin that serves as an assembly site for the inner kinetochore. Required for recruitment and assembly of kinetochore proteins, mitotic progression and chromosome segregation. May serve as an epigenetic mark that propagates centromere identity through replication and cell division. In Kluyveromyces lactis (strain ATCC 8585 / CBS 2359 / DSM 70799 / NBRC 1267 / NRRL Y-1140 / WM37) (Yeast), this protein is Histone H3-like centromeric protein CSE4 (CSE4).